The chain runs to 76 residues: Potassium/proton antiporter CemA (76 aa).

The chain crosses the membrane as a helical span at residues 35–52 (QILSCLVSIFPVILDTIF).

This sequence belongs to the CemA family.

It localises to the plastid. Its subcellular location is the chloroplast inner membrane. It carries out the reaction K(+)(in) + H(+)(out) = K(+)(out) + H(+)(in). Its function is as follows. Contributes to K(+)/H(+) antiport activity by supporting proton efflux to control proton extrusion and homeostasis in chloroplasts in a light-dependent manner to modulate photosynthesis. Prevents excessive induction of non-photochemical quenching (NPQ) under continuous-light conditions. Indirectly promotes efficient inorganic carbon uptake into chloroplasts. The chain is Potassium/proton antiporter CemA from Vicia faba (Broad bean).